The primary structure comprises 199 residues: Recombination protein RecR (199 aa).

The C4-type zinc finger occupies 58–73 (CKKCFNFTSEDECEIC). The Toprim domain occupies 81-175 (KLICVVAETK…KVTRIAYGLP (95 aa)).

The protein belongs to the RecR family.

In terms of biological role, may play a role in DNA repair. It seems to be involved in an RecBC-independent recombinational process of DNA repair. It may act with RecF and RecO. This is Recombination protein RecR from Prochlorococcus marinus (strain MIT 9312).